Consider the following 69-residue polypeptide: Cytochrome c oxidase subunit 8A, mitochondrial (69 aa).

A mitochondrion-targeting transit peptide spans 1–25 (MSVLTPLLLRSLTGSARRLMVPRAQ). The SIFI-degron motif lies at 2–19 (SVLTPLLLRSLTGSARRL). The Mitochondrial matrix portion of the chain corresponds to 26–36 (VHSKPAREQLG). The chain crosses the membrane as a helical span at residues 37–60 (VLDITIGLTSCFVCCLLPAGWVLS). Residues 61-69 (HLESYKKRE) are Mitochondrial intermembrane-facing.

It belongs to the cytochrome c oxidase VIII family. Component of the cytochrome c oxidase (complex IV, CIV), a multisubunit enzyme composed of 14 subunits. The complex is composed of a catalytic core of 3 subunits MT-CO1, MT-CO2 and MT-CO3, encoded in the mitochondrial DNA, and 11 supernumerary subunits COX4I, COX5A, COX5B, COX6A, COX6B, COX6C, COX7A, COX7B, COX7C, COX8 and NDUFA4, which are encoded in the nuclear genome. The complex exists as a monomer or a dimer and forms supercomplexes (SCs) in the inner mitochondrial membrane with NADH-ubiquinone oxidoreductase (complex I, CI) and ubiquinol-cytochrome c oxidoreductase (cytochrome b-c1 complex, complex III, CIII), resulting in different assemblies (supercomplex SCI(1)III(2)IV(1) and megacomplex MCI(2)III(2)IV(2)). In response to mitochondrial stress, the precursor protein is ubiquitinated by the SIFI complex in the cytoplasm before mitochondrial import, leading to its degradation. Within the SIFI complex, UBR4 initiates ubiquitin chain that are further elongated or branched by KCMF1.

Its subcellular location is the mitochondrion inner membrane. The protein operates within energy metabolism; oxidative phosphorylation. In terms of biological role, component of the cytochrome c oxidase, the last enzyme in the mitochondrial electron transport chain which drives oxidative phosphorylation. The respiratory chain contains 3 multisubunit complexes succinate dehydrogenase (complex II, CII), ubiquinol-cytochrome c oxidoreductase (cytochrome b-c1 complex, complex III, CIII) and cytochrome c oxidase (complex IV, CIV), that cooperate to transfer electrons derived from NADH and succinate to molecular oxygen, creating an electrochemical gradient over the inner membrane that drives transmembrane transport and the ATP synthase. Cytochrome c oxidase is the component of the respiratory chain that catalyzes the reduction of oxygen to water. Electrons originating from reduced cytochrome c in the intermembrane space (IMS) are transferred via the dinuclear copper A center (CU(A)) of subunit 2 and heme A of subunit 1 to the active site in subunit 1, a binuclear center (BNC) formed by heme A3 and copper B (CU(B)). The BNC reduces molecular oxygen to 2 water molecules using 4 electrons from cytochrome c in the IMS and 4 protons from the mitochondrial matrix. This Mus musculus (Mouse) protein is Cytochrome c oxidase subunit 8A, mitochondrial (Cox8a).